The chain runs to 513 residues: Na(+)/H(+) antiporter NhaB (513 aa).

The next 11 helical transmembrane spans lie at 21 to 41, 88 to 108, 119 to 139, 143 to 163, 208 to 228, 247 to 267, 303 to 323, 357 to 377, 389 to 409, 447 to 467, and 477 to 497; these read ITIVLFLIINPIIFFFISPFI, IIANFEVILLLIFMVAGIYFM, LLLSIRSKMVLSLAFCLSAAF, FLDALTVVAVIISVGMGFYGV, VGTALGGVMTMVGEPQNLIIA, LPVLICGLVTCFLVEKFGVFG, ALIGIWLVVGLAFHLAAVGII, LVVFFSVVAVIIDQHLFAPII, LALFYIFNGLLSAISDNVFVA, ATPNGQAAFLFLLTSSLAPLI, and MALPYTIVLSCIGLLAVEYIL.

It belongs to the NhaB Na(+)/H(+) (TC 2.A.34) antiporter family.

The protein resides in the cell inner membrane. The catalysed reaction is 2 Na(+)(in) + 3 H(+)(out) = 2 Na(+)(out) + 3 H(+)(in). Na(+)/H(+) antiporter that extrudes sodium in exchange for external protons. This Pasteurella multocida (strain Pm70) protein is Na(+)/H(+) antiporter NhaB.